We begin with the raw amino-acid sequence, 400 residues long: Forkhead box protein Q1 (400 aa).

The segment at 1-112 is disordered; that stretch reads MKLEVFVPRA…EGARSKPYTR (112 aa). Over residues 32–54 the composition is skewed to low complexity; that stretch reads LSAAGDDSLGSDGDCAANSPAAG. 2 stretches are compositionally biased toward gly residues: residues 55–66 and 95–104; these read SGAGDLEGGGGE and CAGGVGGGEG. Positions 115-210 form a DNA-binding region, fork-head; sequence KPPYSYIALI…ADGVFRRRRK (96 aa). A disordered region spans residues 213–264; it reads SHRTTVSASGLRPEEAPPGPAGTPQPAPAARSSPIARSPARQEERSSPASKF. Residues 228 to 239 are compositionally biased toward pro residues; that stretch reads APPGPAGTPQPA. Low complexity predominate over residues 240–251; the sequence is PAARSSPIARSP.

As to expression, expressed in kidney and stomach. Expression in the outer medulla of the kidney and the transitional epithelium. Expressed in the hair follicle medulla.

It localises to the nucleus. Plays a role in hair follicle differentiation. The chain is Forkhead box protein Q1 (Foxq1) from Mus musculus (Mouse).